The following is a 215-amino-acid chain: UPF0323 lipoprotein HP_0232 (215 aa).

An N-terminal signal peptide occupies residues 1–27; that stretch reads MKKPYRKISDYAIVGGLSALVMVSIVG. C28 is lipidated: N-palmitoyl cysteine. A lipid anchor (S-diacylglycerol cysteine) is attached at C28. Residues 158–169 show a composition bias toward polar residues; that stretch reads QRTYKSPQAYQR. A disordered region spans residues 158-215; it reads QRTYKSPQAYQRSQNSFSKSAPSASSMGGASKGQSGFFGSSRPTSSPAVSSGTRGFNS. Low complexity predominate over residues 170–208; that stretch reads SQNSFSKSAPSASSMGGASKGQSGFFGSSRPTSSPAVSS.

The protein belongs to the UPF0323 family.

It is found in the cell membrane. The protein is UPF0323 lipoprotein HP_0232 of Helicobacter pylori (strain ATCC 700392 / 26695) (Campylobacter pylori).